We begin with the raw amino-acid sequence, 262 residues long: Hydroxyethylthiazole kinase (262 aa).

M50 provides a ligand contact to substrate. R125 and T171 together coordinate ATP. G198 is a substrate binding site.

Belongs to the Thz kinase family. The cofactor is Mg(2+).

The enzyme catalyses 5-(2-hydroxyethyl)-4-methylthiazole + ATP = 4-methyl-5-(2-phosphooxyethyl)-thiazole + ADP + H(+). It functions in the pathway cofactor biosynthesis; thiamine diphosphate biosynthesis; 4-methyl-5-(2-phosphoethyl)-thiazole from 5-(2-hydroxyethyl)-4-methylthiazole: step 1/1. In terms of biological role, catalyzes the phosphorylation of the hydroxyl group of 4-methyl-5-beta-hydroxyethylthiazole (THZ). This chain is Hydroxyethylthiazole kinase, found in Escherichia coli O17:K52:H18 (strain UMN026 / ExPEC).